A 615-amino-acid polypeptide reads, in one-letter code: Semenogelin-1 (615 aa).

A signal peptide spans 1–23 (MKPIIFLVLSLLLILEKQAAVMG). Pyrrolidone carboxylic acid is present on Gln-24. Disordered regions lie at residues 24–118 (QKGG…EHGK), 133–160 (GHAP…SQDS), and 172–585 (GKEQ…HRSY). Positions 34–46 (SESSQFPHGQKGQ) are enriched in polar residues. Residues 50–80 (ARKDKQHAESKRSVSIEHTYHVDIPDHDQTR) show a composition bias toward basic and acidic residues. Polar residues predominate over residues 81–91 (TSKQYDLNAQN). Positions 107-118 (FNHKQEGREHGK) are enriched in basic and acidic residues. 3 stretches are compositionally biased toward polar residues: residues 138–160 (GTQN…SQDS), 177–196 (SVSG…SPVL), and 209–224 (TQNS…NVNE). Residues Asn-148, Asn-184, and Asn-223 are each glycosylated (N-linked (GlcNAc...) asparagine). The segment covering 241–253 (QEDRLQHGSKDVF) has biased composition (basic and acidic residues). A compositionally biased stretch (polar residues) spans 254–265 (SKNQNQTRNPNQ). Residues Asn-258 and Asn-275 are each glycosylated (N-linked (GlcNAc...) asparagine). Positions 283–300 (TEERRPNHGEKGIQKDAS) are enriched in basic and acidic residues. Asn-306 carries N-linked (GlcNAc...) asparagine glycosylation. Residues 308-317 (TEDKMHDKSQ) are compositionally biased toward basic and acidic residues. Asn-332 carries an N-linked (GlcNAc...) asparagine glycan. The segment covering 341 to 358 (TEERRPNHGEKGIQKDAS) has biased composition (basic and acidic residues). N-linked (GlcNAc...) asparagine glycosylation occurs at Asn-364. Residues 366–375 (TEDKMHDKSQ) show a composition bias toward basic and acidic residues. Asn-390 carries N-linked (GlcNAc...) asparagine glycosylation. The segment covering 399–416 (TEERRPNHGEKGIQKDAS) has biased composition (basic and acidic residues). Residue Asn-422 is glycosylated (N-linked (GlcNAc...) asparagine). Residues 424–433 (TEDKMHDKSQ) are compositionally biased toward basic and acidic residues. Asn-448 carries an N-linked (GlcNAc...) asparagine glycan. Basic and acidic residues predominate over residues 457 to 474 (TEERRPNHGEKGIQKDAS). Asn-480 carries N-linked (GlcNAc...) asparagine glycosylation. Over residues 481-491 (KTEDKMHDKSQ) the composition is skewed to basic and acidic residues. An N-linked (GlcNAc...) asparagine glycan is attached at Asn-506. Residues 515 to 532 (TEERRPNHGEKGIQKDAS) are compositionally biased toward basic and acidic residues. Asn-538 is a glycosylation site (N-linked (GlcNAc...) asparagine). A compositionally biased stretch (basic and acidic residues) spans 539–549 (KTEDEKHDKSQ). Positions 550-563 (KQVTTPSQDQQSGQ) are enriched in polar residues.

The protein belongs to the semenogelin family. As to quaternary structure, occurs in disulfide-linked complexes. Transglutaminase substrate. Post-translationally, rapidly cleaved after ejaculation by KLK3/PSA, resulting in liquefaction of the semen coagulum and the progressive release of motile spermatozoa.

Its subcellular location is the secreted. Predominant protein in semen. It participates in the formation of a gel matrix entrapping the accessory gland secretions and ejaculated spermatozoa. Fragments of semenogelin and/or fragments of the related proteins may contribute to the activation of progressive sperm movements as the gel-forming proteins are fragmented by KLK3/PSA. This is Semenogelin-1 (SEMG1) from Saguinus oedipus (Cotton-top tamarin).